Here is a 258-residue protein sequence, read N- to C-terminus: Imidazole glycerol phosphate synthase subunit HisF (258 aa).

Catalysis depends on residues aspartate 11 and aspartate 130.

It belongs to the HisA/HisF family. In terms of assembly, heterodimer of HisH and HisF.

It is found in the cytoplasm. The catalysed reaction is 5-[(5-phospho-1-deoxy-D-ribulos-1-ylimino)methylamino]-1-(5-phospho-beta-D-ribosyl)imidazole-4-carboxamide + L-glutamine = D-erythro-1-(imidazol-4-yl)glycerol 3-phosphate + 5-amino-1-(5-phospho-beta-D-ribosyl)imidazole-4-carboxamide + L-glutamate + H(+). The protein operates within amino-acid biosynthesis; L-histidine biosynthesis; L-histidine from 5-phospho-alpha-D-ribose 1-diphosphate: step 5/9. IGPS catalyzes the conversion of PRFAR and glutamine to IGP, AICAR and glutamate. The HisF subunit catalyzes the cyclization activity that produces IGP and AICAR from PRFAR using the ammonia provided by the HisH subunit. This Stenotrophomonas maltophilia (strain R551-3) protein is Imidazole glycerol phosphate synthase subunit HisF.